The primary structure comprises 190 residues: ATP synthase subunit delta (190 aa).

Belongs to the ATPase delta chain family. F-type ATPases have 2 components, F(1) - the catalytic core - and F(0) - the membrane proton channel. F(1) has five subunits: alpha(3), beta(3), gamma(1), delta(1), epsilon(1). F(0) has three main subunits: a(1), b(2) and c(10-14). The alpha and beta chains form an alternating ring which encloses part of the gamma chain. F(1) is attached to F(0) by a central stalk formed by the gamma and epsilon chains, while a peripheral stalk is formed by the delta and b chains.

The protein resides in the cell inner membrane. Functionally, f(1)F(0) ATP synthase produces ATP from ADP in the presence of a proton or sodium gradient. F-type ATPases consist of two structural domains, F(1) containing the extramembraneous catalytic core and F(0) containing the membrane proton channel, linked together by a central stalk and a peripheral stalk. During catalysis, ATP synthesis in the catalytic domain of F(1) is coupled via a rotary mechanism of the central stalk subunits to proton translocation. Its function is as follows. This protein is part of the stalk that links CF(0) to CF(1). It either transmits conformational changes from CF(0) to CF(1) or is implicated in proton conduction. The polypeptide is ATP synthase subunit delta (Methylobacterium sp. (strain 4-46)).